The primary structure comprises 270 residues: 4-hydroxy-tetrahydrodipicolinate reductase (270 aa).

Residues 9–14 (GAGGRM) and E35 each bind NAD(+). R36 contributes to the NADP(+) binding site. Residues 99 to 101 (GTT) and 123 to 126 (ASNF) each bind NAD(+). The active-site Proton donor/acceptor is H156. Residue H157 coordinates (S)-2,3,4,5-tetrahydrodipicolinate. The Proton donor role is filled by K160. 166-167 (GT) is a binding site for (S)-2,3,4,5-tetrahydrodipicolinate.

The protein belongs to the DapB family.

It is found in the cytoplasm. It carries out the reaction (S)-2,3,4,5-tetrahydrodipicolinate + NAD(+) + H2O = (2S,4S)-4-hydroxy-2,3,4,5-tetrahydrodipicolinate + NADH + H(+). The enzyme catalyses (S)-2,3,4,5-tetrahydrodipicolinate + NADP(+) + H2O = (2S,4S)-4-hydroxy-2,3,4,5-tetrahydrodipicolinate + NADPH + H(+). It participates in amino-acid biosynthesis; L-lysine biosynthesis via DAP pathway; (S)-tetrahydrodipicolinate from L-aspartate: step 4/4. Its function is as follows. Catalyzes the conversion of 4-hydroxy-tetrahydrodipicolinate (HTPA) to tetrahydrodipicolinate. This is 4-hydroxy-tetrahydrodipicolinate reductase from Haemophilus influenzae (strain 86-028NP).